Reading from the N-terminus, the 233-residue chain is tRNA (guanine-N(1)-)-methyltransferase (233 aa).

Residues glycine 121 and 140-145 (IGDYIL) each bind S-adenosyl-L-methionine.

It belongs to the RNA methyltransferase TrmD family. In terms of assembly, homodimer.

It is found in the cytoplasm. The catalysed reaction is guanosine(37) in tRNA + S-adenosyl-L-methionine = N(1)-methylguanosine(37) in tRNA + S-adenosyl-L-homocysteine + H(+). Specifically methylates guanosine-37 in various tRNAs. This chain is tRNA (guanine-N(1)-)-methyltransferase, found in Endomicrobium trichonymphae.